The sequence spans 483 residues: Cobyric acid synthase (483 aa).

The 188-residue stretch at 251–438 (ALIVAVPMLP…LHGVFSADRF (188 aa)) folds into the GATase cobBQ-type domain. Cys333 serves as the catalytic Nucleophile. His430 is a catalytic residue.

It belongs to the CobB/CobQ family. CobQ subfamily.

Its pathway is cofactor biosynthesis; adenosylcobalamin biosynthesis. Its function is as follows. Catalyzes amidations at positions B, D, E, and G on adenosylcobyrinic A,C-diamide. NH(2) groups are provided by glutamine, and one molecule of ATP is hydrogenolyzed for each amidation. The polypeptide is Cobyric acid synthase (Brucella suis (strain ATCC 23445 / NCTC 10510)).